Reading from the N-terminus, the 515-residue chain is Tripartite motif-containing protein 5 (515 aa).

N-acetylalanine is present on Ala-2. The RING-type zinc-finger motif lies at 15-60 (CPICLELLTEPLSLPCGHSFCQACITANHKESMLYKEEERSCPVCR). Position 87 is a phosphoserine (Ser-87). The B box-type zinc finger occupies 92-133 (QKVDHCARHGEKLLLFCQEDSKVICWLCERSQEHRGHHTFLM). Zn(2+) is bound by residues Cys-97, His-100, Cys-119, and His-125. The stretch at 137–225 (AQEYHVKLQT…LTKSETEMVQ (89 aa)) forms a coiled coil. Residues 187–200 (FEQLREILDWEESN) are required for interaction with GABARAP and for autophagy. The B30.2/SPRY domain occupies 283 to 515 (LKGMLDMFRE…VPMTLCSPSS (233 aa)).

The protein belongs to the TRIM/RBCC family. Can form homodimers and homotrimers. In addition to lower-order dimerization, also exhibits a higher-order multimerization and both low- and high-order multimerizations are essential for its restriction activity. Interacts with BTBD1 and BTBD2. Interacts with PSMC4, PSMC5, PSMD7 and HSPA8/HSC70. Interacts (via B30.2/SPRY domain) with HSPA1A/B. Interacts with PSMC2, MAP3K7/TAK1, TAB2 and TAB3. Interacts with SQSTM1. Interacts with TRIM6 and TRIM34. Interacts with ULK1 (phosphorylated form), GABARAP, GABARAPL1, GABARAPL2, MAP1LC3A, MAP1LC3C and BECN1. Degraded in a proteasome-independent fashion in the absence of viral infection but in a proteasome-dependent fashion following exposure to restriction sensitive virus. Post-translationally, autoubiquitinated in a RING finger- and UBE2D2-dependent manner. Monoubiquitinated by TRIM21. Deubiquitinated by Yersinia YopJ. Ubiquitination may not lead to proteasomal degradation.

It is found in the cytoplasm. The protein localises to the nucleus. It catalyses the reaction S-ubiquitinyl-[E2 ubiquitin-conjugating enzyme]-L-cysteine + [acceptor protein]-L-lysine = [E2 ubiquitin-conjugating enzyme]-L-cysteine + N(6)-ubiquitinyl-[acceptor protein]-L-lysine.. It functions in the pathway protein modification; protein ubiquitination. Capsid-specific restriction factor that prevents infection from non-host-adapted retroviruses. Blocks viral replication early in the life cycle, after viral entry but before reverse transcription. In addition to acting as a capsid-specific restriction factor, also acts as a pattern recognition receptor that activates innate immune signaling in response to the retroviral capsid lattice. Binding to the viral capsid triggers its E3 ubiquitin ligase activity, and in concert with the heterodimeric ubiquitin conjugating enzyme complex UBE2V1-UBE2N (also known as UBC13-UEV1A complex) generates 'Lys-63'-linked polyubiquitin chains, which in turn are catalysts in the autophosphorylation of the MAP3K7/TAK1 complex (includes TAK1, TAB2, and TAB3). Activation of the MAP3K7/TAK1 complex by autophosphorylation results in the induction and expression of NF-kappa-B and MAPK-responsive inflammatory genes, thereby leading to an innate immune response in the infected cell. Restricts infection by human immunodeficiency virus type 1 (HIV-1), simian immunodeficiency virus (SIV-mac) and N-tropic murine leukemia viruse (N-MLV). Plays a role in regulating autophagy through activation of autophagy regulator BECN1 by causing its dissociation from its inhibitors BCL2 and TAB2. The polypeptide is Tripartite motif-containing protein 5 (TRIM5) (Chlorocebus tantalus (Tantalus monkey)).